Here is a 503-residue protein sequence, read N- to C-terminus: Lysine--tRNA ligase (503 aa).

Positions 412 and 419 each coordinate Mg(2+).

This sequence belongs to the class-II aminoacyl-tRNA synthetase family. As to quaternary structure, homodimer. It depends on Mg(2+) as a cofactor.

It is found in the cytoplasm. It carries out the reaction tRNA(Lys) + L-lysine + ATP = L-lysyl-tRNA(Lys) + AMP + diphosphate. The polypeptide is Lysine--tRNA ligase (Buchnera aphidicola subsp. Schizaphis graminum (strain Sg)).